The following is a 164-amino-acid chain: MVNSVVFFEITRDGKPLGRISIKLFADKIPKTAENFRALSTGEKGFRYKGSCFHRIIPGFMCQGGDFTRPNGTGDKSIYGEKFDDENLIRKHTGSGILSMANAGPNTNGSQFFICAAKTEWLDGKHVAFGKVKERVNIVEATEHFGYRNSKTSKKITIADCGQF.

The PPIase cyclophilin-type domain occupies 7 to 163; that stretch reads FFEITRDGKP…KKITIADCGQ (157 aa).

The protein belongs to the cyclophilin-type PPIase family. PPIase A subfamily.

The protein localises to the cytoplasm. The enzyme catalyses [protein]-peptidylproline (omega=180) = [protein]-peptidylproline (omega=0). In terms of biological role, PPIases accelerate the folding of proteins. It catalyzes the cis-trans isomerization of proline imidic peptide bonds in oligopeptides. This is Peptidyl-prolyl cis-trans isomerase A-like 4D from Homo sapiens (Human).